The sequence spans 304 residues: Dermonecrotic toxin LiSicTox-betaIA1ii (304 aa).

Residues 1-21 (MLLCAVISFIVYAVFLQEANG) form the signal peptide. Positions 22 to 26 (HAAER) are excised as a propeptide. Residue His-38 is part of the active site. The Mg(2+) site is built by Glu-58 and Asp-60. Residue His-74 is the Nucleophile of the active site. Disulfide bonds link Cys-78-Cys-84 and Cys-80-Cys-223. Asp-118 is a Mg(2+) binding site.

The protein belongs to the arthropod phospholipase D family. Class II subfamily. Mg(2+) is required as a cofactor. Expressed by the venom gland.

Its subcellular location is the secreted. The catalysed reaction is an N-(acyl)-sphingosylphosphocholine = an N-(acyl)-sphingosyl-1,3-cyclic phosphate + choline. The enzyme catalyses an N-(acyl)-sphingosylphosphoethanolamine = an N-(acyl)-sphingosyl-1,3-cyclic phosphate + ethanolamine. It carries out the reaction a 1-acyl-sn-glycero-3-phosphocholine = a 1-acyl-sn-glycero-2,3-cyclic phosphate + choline. It catalyses the reaction a 1-acyl-sn-glycero-3-phosphoethanolamine = a 1-acyl-sn-glycero-2,3-cyclic phosphate + ethanolamine. Dermonecrotic toxins cleave the phosphodiester linkage between the phosphate and headgroup of certain phospholipids (sphingolipid and lysolipid substrates), forming an alcohol (often choline) and a cyclic phosphate. This toxin acts on sphingomyelin (SM) with low activity. It may also act on ceramide phosphoethanolamine (CPE), lysophosphatidylcholine (LPC) and lysophosphatidylethanolamine (LPE), but not on lysophosphatidylserine (LPS), and lysophosphatidylglycerol (LPG). It acts by transphosphatidylation, releasing exclusively cyclic phosphate products as second products. Induces dermonecrosis, hemolysis, increased vascular permeability, edema, inflammatory response, and platelet aggregation. This is Dermonecrotic toxin LiSicTox-betaIA1ii from Loxosceles intermedia (Brown spider).